The chain runs to 550 residues: Dihydroxy-acid dehydratase (550 aa).

Aspartate 78 is a binding site for Mg(2+). Residue cysteine 119 coordinates [2Fe-2S] cluster. 2 residues coordinate Mg(2+): aspartate 120 and lysine 121. At lysine 121 the chain carries N6-carboxylysine. Cysteine 191 lines the [2Fe-2S] cluster pocket. A Mg(2+)-binding site is contributed by glutamate 440. Serine 466 functions as the Proton acceptor in the catalytic mechanism.

This sequence belongs to the IlvD/Edd family. In terms of assembly, homodimer. The cofactor is [2Fe-2S] cluster. It depends on Mg(2+) as a cofactor.

It catalyses the reaction (2R)-2,3-dihydroxy-3-methylbutanoate = 3-methyl-2-oxobutanoate + H2O. The enzyme catalyses (2R,3R)-2,3-dihydroxy-3-methylpentanoate = (S)-3-methyl-2-oxopentanoate + H2O. It functions in the pathway amino-acid biosynthesis; L-isoleucine biosynthesis; L-isoleucine from 2-oxobutanoate: step 3/4. It participates in amino-acid biosynthesis; L-valine biosynthesis; L-valine from pyruvate: step 3/4. In terms of biological role, functions in the biosynthesis of branched-chain amino acids. Catalyzes the dehydration of (2R,3R)-2,3-dihydroxy-3-methylpentanoate (2,3-dihydroxy-3-methylvalerate) into 2-oxo-3-methylpentanoate (2-oxo-3-methylvalerate) and of (2R)-2,3-dihydroxy-3-methylbutanoate (2,3-dihydroxyisovalerate) into 2-oxo-3-methylbutanoate (2-oxoisovalerate), the penultimate precursor to L-isoleucine and L-valine, respectively. The sequence is that of Dihydroxy-acid dehydratase from Methanococcus maripaludis (strain C6 / ATCC BAA-1332).